A 302-amino-acid chain; its full sequence is uncharacterized protein (302 aa).

The S4 RNA-binding domain maps to 19–90 (QWLFSVLKTA…GELDILFEDN (72 aa)). Residue D138 is part of the active site. The disordered stretch occupies residues 182 to 205 (KGTINSPIGRDRSHPTRRRVSPGG).

This sequence belongs to the pseudouridine synthase RluA family.

The catalysed reaction is a uridine in RNA = a pseudouridine in RNA. This is an uncharacterized protein from Bacillus subtilis (strain 168).